Consider the following 540-residue polypeptide: Acyl-CoA synthetase 7 (540 aa).

ATP-binding positions include 186–194 (SSGTTGKPK), Asp-415, Arg-430, and Lys-522. The Microbody targeting signal motif lies at 538 to 540 (AKL).

It belongs to the ATP-dependent AMP-binding enzyme family. As to expression, expressed in intestine.

It localises to the peroxisome. It catalyses the reaction nonanoate + ATP + CoA = nonanoyl-CoA + AMP + diphosphate. The enzyme catalyses IC-asc-C7 + ATP + CoA = IC-asc-C7-CoA + AMP + diphosphate. The catalysed reaction is IC-asc-C9 + ATP + CoA = IC-asc-C9-CoA + AMP + diphosphate. In terms of biological role, plays a role in ascaroside pheromones biosynthesis, which regulates development and behavior. Specifically, activates the side chain of medium-chain indol-3-carbonyl (IC)-ascarosides for shortening through beta-oxidation. Converts IC-asc-C7 and IC-asc-C9 into IC-asc-C7-CoA and IC-asc-C9-CoA, respectively. May play a role in fatty-acid metabolism by activating and converting nonanoate (C9) into nonanoyl-CoA (C9-CoA). This Caenorhabditis elegans protein is Acyl-CoA synthetase 7.